The primary structure comprises 463 residues: Glutamate--tRNA ligase 1 (463 aa).

The 'HIGH' region signature appears at 11–21; the sequence is PSPTGYLHIGG. The 'KMSKS' region motif lies at 240–244; the sequence is KLSKR. Lys-243 contributes to the ATP binding site.

Belongs to the class-I aminoacyl-tRNA synthetase family. Glutamate--tRNA ligase type 1 subfamily. As to quaternary structure, monomer.

It is found in the cytoplasm. The enzyme catalyses tRNA(Glu) + L-glutamate + ATP = L-glutamyl-tRNA(Glu) + AMP + diphosphate. Catalyzes the attachment of glutamate to tRNA(Glu) in a two-step reaction: glutamate is first activated by ATP to form Glu-AMP and then transferred to the acceptor end of tRNA(Glu). The chain is Glutamate--tRNA ligase 1 from Campylobacter jejuni subsp. doylei (strain ATCC BAA-1458 / RM4099 / 269.97).